Here is a 379-residue protein sequence, read N- to C-terminus: Multicilin (379 aa).

A necessary and sufficient for its degradation during the cell cycle region spans residues 1 to 129 (MQACEGSAAG…AMDDLIADSS (129 aa)). 2 disordered regions span residues 26-71 (SRRT…APLP) and 88-107 (LGTE…PSLQ). The segment covering 92 to 107 (ASPSGDSSASQNPSLQ) has biased composition (polar residues). The segment at 130–379 (SLMSPPLTNS…GGYKFRWVPS (250 aa)) is necessary and sufficient for proper nuclear localization. The necessary and sufficient for interaction with GMNN and sufficient for homodimerization stretch occupies residues 171–241 (PPPTEQYWKE…SVLDKLMITQ (71 aa)). The stretch at 175–223 (EQYWKEVADQNQRALGTALIENNQLHVTLTQKQEEIASLRERNVQLKEL) forms a coiled coil. Over residues 291–309 (NRDPKRPRLQPEPDSKDCS) the composition is skewed to basic and acidic residues. The segment at 291 to 312 (NRDPKRPRLQPEPDSKDCSSRN) is disordered.

This sequence belongs to the geminin family. In terms of assembly, heterodimer (via coiled-coil domain) with GMNN (via coiled-coil domain); targets GMNN to the nucleus. Can form homodimers (in vitro, via coiled-coil domain), but these are much less stable than the heterodimer formed with GMNN.

It is found in the nucleus. Functionally, transcription regulator specifically required for multiciliate cell differentiation. Acts in a multiprotein complex containing E2F4 and E2F5 that binds and activates genes required for centriole biogenesis. Required for the deuterosome-mediated acentriolar pathway. Plays a role in mitotic cell cycle progression by promoting cell cycle exit. Modulates GMNN activity by reducing its affinity for CDT1. The chain is Multicilin (Mcidas) from Mus musculus (Mouse).